Here is a 178-residue protein sequence, read N- to C-terminus: Probable major fimbrial subunit LpfA (178 aa).

The N-terminal stretch at Met-1–Ala-24 is a signal peptide.

The protein belongs to the fimbrial protein family.

The protein localises to the fimbrium. Functionally, part of the lpfABCC'DE fimbrial operon. LP fimbriae may participate in the interaction with eukaryotic cells by assisting in microcolony formation. The protein is Probable major fimbrial subunit LpfA (lpfA) of Escherichia coli O157:H7.